The chain runs to 88 residues: Small ribosomal subunit protein uS15 (88 aa).

The protein belongs to the universal ribosomal protein uS15 family. In terms of assembly, part of the 30S ribosomal subunit. Forms a bridge to the 50S subunit in the 70S ribosome, contacting the 23S rRNA.

One of the primary rRNA binding proteins, it binds directly to 16S rRNA where it helps nucleate assembly of the platform of the 30S subunit by binding and bridging several RNA helices of the 16S rRNA. Functionally, forms an intersubunit bridge (bridge B4) with the 23S rRNA of the 50S subunit in the ribosome. This chain is Small ribosomal subunit protein uS15, found in Flavobacterium psychrophilum (strain ATCC 49511 / DSM 21280 / CIP 103535 / JIP02/86).